The primary structure comprises 199 residues: MTTLTAQQIACVYAWLAQLFSRELDDEQLTQIASAQMAEWFSLLKSEPPLTAAVNGLENSIATLTVRDDARLELAADFCGLFLMTDKQAALPYASAYKQDEQEIKRLLVEAGMETSGNFNEPADHLAIYPELLSHLHFSLGEGTVPARRIDGLRQKTLTALREWLPEFAARCRQYDRFGFYAALSQLLLVLVECDYQKR.

The protein belongs to the TorD/DmsD family. TorD subfamily.

The protein resides in the cytoplasm. Involved in the biogenesis of TorA. Acts on TorA before the insertion of the molybdenum cofactor and, as a result, probably favors a conformation of the apoenzyme that is competent for acquiring the cofactor. This Escherichia coli O6:H1 (strain CFT073 / ATCC 700928 / UPEC) protein is Chaperone protein TorD.